The chain runs to 533 residues: Glucose-6-phosphate isomerase (533 aa).

The active-site Proton donor is the E322. Catalysis depends on residues H351 and K455.

Belongs to the GPI family.

The protein localises to the cytoplasm. The enzyme catalyses alpha-D-glucose 6-phosphate = beta-D-fructose 6-phosphate. It participates in carbohydrate biosynthesis; gluconeogenesis. Its pathway is carbohydrate degradation; glycolysis; D-glyceraldehyde 3-phosphate and glycerone phosphate from D-glucose: step 2/4. Catalyzes the reversible isomerization of glucose-6-phosphate to fructose-6-phosphate. This chain is Glucose-6-phosphate isomerase, found in Desulfitobacterium hafniense (strain DSM 10664 / DCB-2).